The chain runs to 545 residues: Phospholipase B-like 1 (545 aa).

Positions 1 to 35 are cleaved as a signal peptide; sequence MSRHSQDERLGLPQPPALLPLLLLLLAVAVPLSQA. Asn68 carries N-linked (GlcNAc...) (high mannose) asparagine; alternate glycosylation. The N-linked (GlcNAc...) (hybrid) asparagine; alternate glycan is linked to Asn68. Positions 206-224 are cleaved as a propeptide — removed in mature form; that stretch reads LSPTKNSSLKFFKRWDMGH. 3 N-linked (GlcNAc...) (high mannose) asparagine; alternate glycosylation sites follow: Asn305, Asn363, and Asn408. Residues Asn305, Asn363, and Asn408 are each glycosylated (N-linked (GlcNAc...) (hybrid) asparagine; alternate). Cystine bridges form between Cys467/Cys472 and Cys471/Cys486. N-linked (GlcNAc...) (high mannose) asparagine; alternate glycosylation is present at Asn523. The N-linked (GlcNAc...) (hybrid) asparagine; alternate glycan is linked to Asn523.

The protein belongs to the phospholipase B-like family. May form a homodimer, each monomer is composed of a chain A and a chain B. In terms of processing, the maturation cleavages that produces chains A and B are required to open the putative substrate binding pocket. Both chains A and B remain associated in the mature protein.

It localises to the lysosome. Functionally, exhibits a weak phospholipase activity, acting on various phospholipids, including phosphatidylcholine, phosphatidylinositol, phosphatidylethanolamine and lysophospholipids. However, in view of the small size of the putative binding pocket, it has been proposed that it may act rather as an amidase or a peptidase. This Bos taurus (Bovine) protein is Phospholipase B-like 1 (PLBD1).